A 274-amino-acid chain; its full sequence is Diaminopimelate epimerase (274 aa).

Residues Asn-11, Gln-44, and Asn-64 each coordinate substrate. The active-site Proton donor is Cys-73. Residues 74-75 (GN), Asn-157, Asn-190, and 208-209 (ER) contribute to the substrate site. The active-site Proton acceptor is the Cys-217. 218–219 (GS) lines the substrate pocket.

Belongs to the diaminopimelate epimerase family. As to quaternary structure, homodimer.

The protein localises to the cytoplasm. It catalyses the reaction (2S,6S)-2,6-diaminopimelate = meso-2,6-diaminopimelate. It participates in amino-acid biosynthesis; L-lysine biosynthesis via DAP pathway; DL-2,6-diaminopimelate from LL-2,6-diaminopimelate: step 1/1. Its function is as follows. Catalyzes the stereoinversion of LL-2,6-diaminopimelate (L,L-DAP) to meso-diaminopimelate (meso-DAP), a precursor of L-lysine and an essential component of the bacterial peptidoglycan. The chain is Diaminopimelate epimerase from Haemophilus influenzae (strain PittGG).